Consider the following 95-residue polypeptide: Protein TusB (95 aa).

The protein belongs to the DsrH/TusB family. Heterohexamer, formed by a dimer of trimers. The hexameric TusBCD complex contains 2 copies each of TusB, TusC and TusD. The TusBCD complex interacts with TusE.

It is found in the cytoplasm. Functionally, part of a sulfur-relay system required for 2-thiolation of 5-methylaminomethyl-2-thiouridine (mnm(5)s(2)U) at tRNA wobble positions. The polypeptide is Protein TusB (Buchnera aphidicola subsp. Acyrthosiphon pisum (strain 5A)).